Reading from the N-terminus, the 629-residue chain is Protein fem-1 homolog B (629 aa).

6 ANK repeats span residues 47-77 (QRST…DVQQ), 89-118 (DGAT…NVNH), 122-151 (TNST…NISI), 155-184 (YDNT…DPNA), 188-217 (CGAT…AMVV), and 220-250 (HGMT…DAKS). The TPR repeat unit spans residues 346–379 (SHPIIYRGAVYADNMQFEQCIKLWLHALQLRQKG). ANK repeat units lie at residues 485 to 529 (EGGS…NVNA) and 533 to 570 (MGNS…HTDM).

The protein belongs to the fem-1 family. As to quaternary structure, component of a CRL2 E3 ubiquitin-protein ligase complex, also named ECS (Elongin BC-CUL2/5-SOCS-box protein) complex.

It localises to the cytoplasm. The protein resides in the nucleus. The protein operates within protein modification; protein ubiquitination. Substrate-recognition component of a Cul2-RING (CRL2) E3 ubiquitin-protein ligase complex of the DesCEND (destruction via C-end degrons) pathway, which recognizes a C-degron located at the extreme C terminus of target proteins, leading to their ubiquitination and degradation. The C-degron recognized by the DesCEND pathway is usually a motif of less than ten residues and can be present in full-length proteins, truncated proteins or proteolytically cleaved forms. The CRL2(FEM1B) complex specifically recognizes proteins ending with -Gly-Leu-Asp-Arg, leading to their ubiquitination and degradation. This chain is Protein fem-1 homolog B, found in Xenopus laevis (African clawed frog).